The following is a 94-amino-acid chain: Small ribosomal subunit protein bS6 (94 aa).

It belongs to the bacterial ribosomal protein bS6 family.

Functionally, binds together with bS18 to 16S ribosomal RNA. This Desulforudis audaxviator (strain MP104C) protein is Small ribosomal subunit protein bS6.